A 239-amino-acid chain; its full sequence is Exosome complex component Rrp41 (239 aa).

Positions M1–P21 are disordered.

The protein belongs to the RNase PH family. Rrp41 subfamily. In terms of assembly, component of the archaeal exosome complex. Forms a hexameric ring-like arrangement composed of 3 Rrp41-Rrp42 heterodimers. The hexameric ring associates with a trimer of Rrp4 and/or Csl4 subunits.

Its subcellular location is the cytoplasm. In terms of biological role, catalytic component of the exosome, which is a complex involved in RNA degradation. Has 3'-&gt;5' exoribonuclease activity. Can also synthesize heteromeric RNA-tails. This Methanopyrus kandleri (strain AV19 / DSM 6324 / JCM 9639 / NBRC 100938) protein is Exosome complex component Rrp41.